The sequence spans 335 residues: MSKEAEMSIAVSALFPGFRFSPTDVELISYYLRRKIDGDENSVAVIAEVEIYKFEPWDLPEESKLKSENEWFYFCARGRKYPHGSQSRRATQLGYWKATGKERSVKSGNQVVGTKRTLVFHIGRAPRGERTEWIMHEYCIHGAPQDALVVCRLRKNADFRASSTQKMEDGVVQDDGYVGQRGGLEKEDKSYYESEHQIPNGDIAESSNVVEDQADTDDDCYAEILNDDIIKLDEEALKASQAFRPTNPTHQETISSESSSKRSKCGIKKESTETMNCYALFRIKNVAGTDSSWRFPNPFKIKKDDSQRLMKNVLATTVFLAILFSFFWTVLIARN.

The 143-residue stretch at 14 to 156 folds into the NAC domain; sequence LFPGFRFSPT…ALVVCRLRKN (143 aa). The DNA-binding element occupies 112-162; sequence VGTKRTLVFHIGRAPRGERTEWIMHEYCIHGAPQDALVVCRLRKNADFRAS. Residues 245-254 are compositionally biased toward polar residues; it reads PTNPTHQETI. Residues 245–267 are disordered; it reads PTNPTHQETISSESSSKRSKCGI. A helical membrane pass occupies residues 313–333; the sequence is VLATTVFLAILFSFFWTVLIA.

Proteolytically cleaved, probably by metalloprotease activity. This cleavage mediates a translocation from the plasma membrane to the nucleus. Expressed in seeds, leaves, roots and inflorescence. Expressed in roots, rosette leaves, cauline leaves, shoot apex, stems and flowers.

It is found in the cell membrane. Its subcellular location is the nucleus. Transcriptional activator activated by proteolytic cleavage through regulated intramembrane proteolysis (RIP), probably via metalloprotease activity. Regulates gibberellic acid-mediated salt-responsive repression of seed germination and flowering via FT, thus delaying seed germination under high salinity conditions. This Arabidopsis thaliana (Mouse-ear cress) protein is NAC domain-containing protein 40.